Here is a 238-residue protein sequence, read N- to C-terminus: Transcriptional activator protein AnoR (238 aa).

Positions 170-236 constitute an HTH luxR-type domain; it reads EFSQFNLYLT…SAAIRAVMLG (67 aa). A DNA-binding region (H-T-H motif) is located at residues 195-214; it reads SAEIAQIIGVTERTVNFHLC.

It belongs to the autoinducer-regulated transcriptional regulatory protein family.

Functionally, positively regulates the expression of anoI. Required for biofilm formation and motility. Probably part of a quorum-sensing system with AnoI. In Acinetobacter nosocomialis, this protein is Transcriptional activator protein AnoR.